Here is a 100-residue protein sequence, read N- to C-terminus: Urease subunit gamma (100 aa).

The protein belongs to the urease gamma subunit family. As to quaternary structure, heterotrimer of UreA (gamma), UreB (beta) and UreC (alpha) subunits. Three heterotrimers associate to form the active enzyme.

The protein resides in the cytoplasm. The catalysed reaction is urea + 2 H2O + H(+) = hydrogencarbonate + 2 NH4(+). The protein operates within nitrogen metabolism; urea degradation; CO(2) and NH(3) from urea (urease route): step 1/1. This is Urease subunit gamma from Alkalilimnicola ehrlichii (strain ATCC BAA-1101 / DSM 17681 / MLHE-1).